Reading from the N-terminus, the 180-residue chain is Cell division protein SepF (180 aa).

The segment at 14-81 (NSEDDEEFDN…SKITPISKSS (68 aa)) is disordered. Residues 15-35 (SEDDEEFDNEDYYLDDEEEEE) are compositionally biased toward acidic residues. Basic and acidic residues predominate over residues 57–68 (TRRDTTPKEKPV). Low complexity predominate over residues 69 to 79 (KTTSKITPISK).

Belongs to the SepF family. In terms of assembly, homodimer. Interacts with FtsZ.

The protein resides in the cytoplasm. Functionally, cell division protein that is part of the divisome complex and is recruited early to the Z-ring. Probably stimulates Z-ring formation, perhaps through the cross-linking of FtsZ protofilaments. Its function overlaps with FtsA. The protein is Cell division protein SepF of Agathobacter rectalis (strain ATCC 33656 / DSM 3377 / JCM 17463 / KCTC 5835 / VPI 0990) (Eubacterium rectale).